A 204-amino-acid chain; its full sequence is Inactive ribonuclease-like protein 9 (204 aa).

The signal sequence occupies residues M1–F26. 3 disulfides stabilise this stretch: C97–C152, C115–C167, and C122–C129. N130 and N142 each carry an N-linked (GlcNAc...) asparagine glycan.

This sequence belongs to the pancreatic ribonuclease family.

Its subcellular location is the secreted. Functionally, does not exhibit any ribonuclease activity. The sequence is that of Inactive ribonuclease-like protein 9 (RNASE9) from Papio anubis (Olive baboon).